We begin with the raw amino-acid sequence, 123 residues long: Large ribosomal subunit protein bL12 (123 aa).

Belongs to the bacterial ribosomal protein bL12 family. In terms of assembly, homodimer. Part of the ribosomal stalk of the 50S ribosomal subunit. Forms a multimeric L10(L12)X complex, where L10 forms an elongated spine to which 2 to 4 L12 dimers bind in a sequential fashion. Binds GTP-bound translation factors.

Functionally, forms part of the ribosomal stalk which helps the ribosome interact with GTP-bound translation factors. Is thus essential for accurate translation. This Rhodopseudomonas palustris (strain BisB18) protein is Large ribosomal subunit protein bL12.